The sequence spans 957 residues: Collagen alpha-1(I) chain (957 aa).

The tract at residues 1–957 (GPMGPSGPRG…PGPPGPPGPP (957 aa)) is disordered. Residues 23 to 33 (FPGEPGASGPM) show a composition bias toward low complexity. The span at 45-59 (NGDDGEAGKPGRPGE) shows a compositional bias: basic and acidic residues. A Phosphoserine modification is found at Ser87. 2 stretches are compositionally biased toward low complexity: residues 95 to 113 (DAGP…PRGI) and 125 to 138 (PAGA…TGAA). The span at 140–152 (PPGPTGPAGPPGF) shows a compositional bias: pro residues. Composition is skewed to low complexity over residues 186–210 (AGAA…RGPS) and 219–228 (SGPKGNSGEP). Positions 277–286 (GERGGPGSRG) are enriched in gly residues. Composition is skewed to low complexity over residues 330–356 (KGIT…QDGR), 365–384 (ARGQ…AGEP), 426–453 (QGPA…PGEQ), 488–516 (PRGA…QGAP), 576–590 (AGPS…ARGA), 603–618 (AGFA…PGAK), 649–665 (SAGP…AGRV), and 707–731 (AGEK…QGIA). Ser579 is modified (phosphoserine). Pro residues-rich tracts occupy residues 772 to 782 (PPGPMGPPGIA) and 818 to 833 (AGPP…PGPV). Residues 854 to 868 (IGPVGARGAAGPQGP) are compositionally biased toward low complexity. The segment covering 869–883 (RGDKGETGEQGDRGI) has biased composition (basic and acidic residues). Residues 902-935 (PGEQGPSGASGPAGPRGPPGSAGSPGKDGINGIP) show a composition bias toward low complexity. Positions 937 to 957 (PIGPPGPRPGPPGPPGPPGPP) are enriched in pro residues.

It belongs to the fibrillar collagen family. In terms of assembly, trimers of one alpha 2(I) and two alpha 1(I) chains. Post-translationally, prolines at the third position of the tripeptide repeating unit (G-X-Y) are hydroxylated in some or all of the chains. Forms the fibrils of tendon, ligaments and bones. In bones, the fibrils are mineralized with calcium hydroxyapatite.

Its subcellular location is the secreted. The protein resides in the extracellular space. It localises to the extracellular matrix. In terms of biological role, type I collagen is a member of group I collagen (fibrillar forming collagen). The chain is Collagen alpha-1(I) chain from Hippopotamus amphibius (Hippopotamus).